Reading from the N-terminus, the 130-residue chain is uncharacterized protein (130 aa).

The disordered stretch occupies residues 48-130 (RGYWPQGPPP…LIAAMEEDER (83 aa)). The segment covering 80–107 (GGDGGGDAGAGPSGVAGTAAGGAGGDGA) has biased composition (gly residues).

This is an uncharacterized protein from Aotus trivirgatus (Three-striped night monkey).